Consider the following 90-residue polypeptide: MNNSVITVIGKDRVGIVYDVSKILAENRINILNISQQLMDDFFTMIILVDTSKCSKSRQEVLDLFAEESKKLALDIRMQNEEIFQAMHRI.

One can recognise an ACT domain in the interval 5–83; the sequence is VITVIGKDRV…LDIRMQNEEI (79 aa).

The protein belongs to the UPF0237 family.

This chain is UPF0237 protein NMA1909, found in Neisseria meningitidis serogroup A / serotype 4A (strain DSM 15465 / Z2491).